Consider the following 323-residue polypeptide: Elongation factor P--(R)-beta-lysine ligase (323 aa).

76–78 contacts substrate; sequence SPE. ATP is bound by residues 100–102 and Asn109; that span reads RNE. Residue Tyr118 participates in substrate binding. 242-243 is a binding site for ATP; it reads EL. Substrate is bound at residue Glu249. Gly298 contacts ATP.

Belongs to the class-II aminoacyl-tRNA synthetase family. EpmA subfamily. As to quaternary structure, homodimer.

It carries out the reaction D-beta-lysine + L-lysyl-[protein] + ATP = N(6)-((3R)-3,6-diaminohexanoyl)-L-lysyl-[protein] + AMP + diphosphate + H(+). In terms of biological role, with EpmB is involved in the beta-lysylation step of the post-translational modification of translation elongation factor P (EF-P). Catalyzes the ATP-dependent activation of (R)-beta-lysine produced by EpmB, forming a lysyl-adenylate, from which the beta-lysyl moiety is then transferred to the epsilon-amino group of a conserved specific lysine residue in EF-P. This is Elongation factor P--(R)-beta-lysine ligase from Haemophilus influenzae (strain PittGG).